The primary structure comprises 191 residues: Protein GrpE (191 aa).

It belongs to the GrpE family. As to quaternary structure, homodimer.

It is found in the cytoplasm. Functionally, participates actively in the response to hyperosmotic and heat shock by preventing the aggregation of stress-denatured proteins, in association with DnaK and GrpE. It is the nucleotide exchange factor for DnaK and may function as a thermosensor. Unfolded proteins bind initially to DnaJ; upon interaction with the DnaJ-bound protein, DnaK hydrolyzes its bound ATP, resulting in the formation of a stable complex. GrpE releases ADP from DnaK; ATP binding to DnaK triggers the release of the substrate protein, thus completing the reaction cycle. Several rounds of ATP-dependent interactions between DnaJ, DnaK and GrpE are required for fully efficient folding. The polypeptide is Protein GrpE (Helicobacter pylori (strain P12)).